A 128-amino-acid polypeptide reads, in one-letter code: UPF0102 protein KPN78578_35270 (128 aa).

The disordered stretch occupies residues 1-20; that stretch reads MAQVPAGKNRSGQLSKQTGD.

This sequence belongs to the UPF0102 family.

The sequence is that of UPF0102 protein KPN78578_35270 from Klebsiella pneumoniae subsp. pneumoniae (strain ATCC 700721 / MGH 78578).